A 406-amino-acid chain; its full sequence is Indole-3-pyruvate monooxygenase YUCCA1 (406 aa).

21 to 26 (GAGPSG) provides a ligand contact to FAD. 184–189 (GCGNSG) contributes to the NADP(+) binding site.

Belongs to the FMO family. It depends on FAD as a cofactor. Expressed in coleoptile tips, root tips, leaf blade tips, shoot apical meristem, vasculature of stems and flowers.

The enzyme catalyses indole-3-pyruvate + NADPH + O2 + H(+) = (indol-3-yl)acetate + CO2 + NADP(+) + H2O. Involved in auxin biosynthesis. Converts the indole-3-pyruvic acid (IPA) produced by the TAA family to indole-3-acetic acid (IAA). Functions downstream of TAR2 in auxin biosynthesis. Functions upstream of WOX11, a transcription factor that promotes the development of crown roots. The sequence is that of Indole-3-pyruvate monooxygenase YUCCA1 from Oryza sativa subsp. japonica (Rice).